We begin with the raw amino-acid sequence, 283 residues long: CASP-like protein 4A3 (283 aa).

The interval 1–86 (MRSPAKTMPS…VEETPSPIVV (86 aa)) is disordered. Topologically, residues 1 to 135 (MRSPAKTMPS…SRREEVVKFS (135 aa)) are cytoplasmic. The span at 9 to 20 (PSMSPSSVSTEK) shows a compositional bias: low complexity. Residues 50–79 (SLDHSSESEKEDAKSKPESRRNKNPGKVEE) are compositionally biased toward basic and acidic residues. The chain crosses the membrane as a helical span at residues 136–156 (ALGFRLSEVVLALISFSIMAA). Topologically, residues 157–174 (DKTKGWSGDSFDRYKEYR) are extracellular. The chain crosses the membrane as a helical span at residues 175–195 (FCLSVNVVAFVYSSFQACDLA). Residues 196 to 212 (YHLVKEKHLISHHLRPL) lie on the Cytoplasmic side of the membrane. The chain crosses the membrane as a helical span at residues 213–233 (FEFIIDQVLAYLLMSASTAAV). At 234-251 (TRVDDWVSNWGKDEFTEM) the chain is on the extracellular side. A helical membrane pass occupies residues 252-272 (ASASIAMSFLAFLAFAFSSLI). Residues 273 to 283 (SGYNLFNQGSL) are Cytoplasmic-facing.

It belongs to the Casparian strip membrane proteins (CASP) family. Homodimer and heterodimers.

Its subcellular location is the cell membrane. In Arabidopsis thaliana (Mouse-ear cress), this protein is CASP-like protein 4A3.